Here is a 161-residue protein sequence, read N- to C-terminus: Ribonuclease P protein component 2 (161 aa).

It belongs to the eukaryotic/archaeal RNase P protein component 2 family. Consists of a catalytic RNA component and at least 4-5 protein subunits.

The protein resides in the cytoplasm. It catalyses the reaction Endonucleolytic cleavage of RNA, removing 5'-extranucleotides from tRNA precursor.. Functionally, part of ribonuclease P, a protein complex that generates mature tRNA molecules by cleaving their 5'-ends. The sequence is that of Ribonuclease P protein component 2 from Methanopyrus kandleri (strain AV19 / DSM 6324 / JCM 9639 / NBRC 100938).